Consider the following 115-residue polypeptide: U2-ctenitoxin-Pn1b (115 aa).

The signal sequence occupies residues 1-17 (MKVAVIILSILVLAAAS). A propeptide spanning residues 18–61 (ESIEEYREDFSRPNAMERSANDWIPTAPSAVERSADFAVEELER) is cleaved from the precursor. Disulfide bonds link cysteine 64-cysteine 78, cysteine 71-cysteine 84, cysteine 75-cysteine 113, cysteine 77-cysteine 98, and cysteine 86-cysteine 96. A propeptide is located at residue lysine 115.

The protein belongs to the neurotoxin 03 (Tx2) family. 04 subfamily. Expressed by the venom gland.

The protein localises to the secreted. In terms of biological role, blocks voltage-gated sodium channels (Nav). The sequence is that of U2-ctenitoxin-Pn1b from Phoneutria nigriventer (Brazilian armed spider).